Reading from the N-terminus, the 606-residue chain is Elongation factor 4 (606 aa).

Residues Ile10–Arg192 enclose the tr-type G domain. Residues Asp22–Thr27 and Asn139–Asp142 each bind GTP.

Belongs to the TRAFAC class translation factor GTPase superfamily. Classic translation factor GTPase family. LepA subfamily.

Its subcellular location is the cell inner membrane. It catalyses the reaction GTP + H2O = GDP + phosphate + H(+). Required for accurate and efficient protein synthesis under certain stress conditions. May act as a fidelity factor of the translation reaction, by catalyzing a one-codon backward translocation of tRNAs on improperly translocated ribosomes. Back-translocation proceeds from a post-translocation (POST) complex to a pre-translocation (PRE) complex, thus giving elongation factor G a second chance to translocate the tRNAs correctly. Binds to ribosomes in a GTP-dependent manner. The polypeptide is Elongation factor 4 (Borreliella burgdorferi (strain ATCC 35210 / DSM 4680 / CIP 102532 / B31) (Borrelia burgdorferi)).